A 241-amino-acid chain; its full sequence is Leucyl/phenylalanyl-tRNA--protein transferase (241 aa).

This sequence belongs to the L/F-transferase family.

It is found in the cytoplasm. The catalysed reaction is N-terminal L-lysyl-[protein] + L-leucyl-tRNA(Leu) = N-terminal L-leucyl-L-lysyl-[protein] + tRNA(Leu) + H(+). It catalyses the reaction N-terminal L-arginyl-[protein] + L-leucyl-tRNA(Leu) = N-terminal L-leucyl-L-arginyl-[protein] + tRNA(Leu) + H(+). The enzyme catalyses L-phenylalanyl-tRNA(Phe) + an N-terminal L-alpha-aminoacyl-[protein] = an N-terminal L-phenylalanyl-L-alpha-aminoacyl-[protein] + tRNA(Phe). In terms of biological role, functions in the N-end rule pathway of protein degradation where it conjugates Leu, Phe and, less efficiently, Met from aminoacyl-tRNAs to the N-termini of proteins containing an N-terminal arginine or lysine. The sequence is that of Leucyl/phenylalanyl-tRNA--protein transferase from Neisseria meningitidis serogroup B (strain ATCC BAA-335 / MC58).